The chain runs to 66 residues: MAAVAGRDDDTFVFMGARHAAPVSADWFRFSGRSPVGTRRSRLTWRLTWLTCPAPPRLCRLPVERA.

This is an uncharacterized protein from Human cytomegalovirus (strain AD169) (HHV-5).